The primary structure comprises 251 residues: Capsid protein (251 aa).

Positions 1–35 (MPKRDAPWRHMAGTSKVSRSGNYSPSGGMGSKSNK) are disordered. A Bipartite nuclear localization signal motif is present at residues 3–20 (KRDAPWRHMAGTSKVSRS). Over residues 15 to 35 (SKVSRSGNYSPSGGMGSKSNK) the composition is skewed to polar residues. A Nuclear localization signal motif is present at residues 35-49 (KANAWVNRPMYRKPR). Residues 54-71 (YKSPDVPKGCEGPCKVQS) fold into a zinc finger. The Nuclear export signal signature appears at 96-117 (ITHRVGKRFCVKSVYILGKIWM). The short motif at 195 to 242 (RRFWKVNNHVVYNHQEAGKYENHTENALLLYMACTHASNPVYATLKIR) is the Bipartite nuclear localization signal element.

Belongs to the geminiviridae capsid protein family. In terms of assembly, homomultimer. Binds to single-stranded and double-stranded viral DNA. Interacts (via nuclear localization signals) with host importin alpha-1a.

Its subcellular location is the virion. It localises to the host nucleus. Encapsidates the viral DNA into characteristic twinned ('geminate') particles. Binds the genomic viral ssDNA and shuttles it into and out of the cell nucleus. The CP of bipartite geminiviruses is not required for cell-to-cell or systemic movement. This chain is Capsid protein, found in Macroptilium lathyroides (Lima bean).